Here is a 715-residue protein sequence, read N- to C-terminus: Probable phospholipase YOR022C, mitochondrial (715 aa).

The N-terminal 22 residues, 1-22, are a transit peptide targeting the mitochondrion; it reads MLRFTHRGLPSSTRFRNIFVRL. Disordered regions lie at residues 161–180, 242–268, and 311–340; these read YPVD…NKDE, TSTS…SRSI, and YNNA…RQIR. The span at 242 to 251 shows a compositional bias: low complexity; it reads TSTSFKAAKT. Positions 311–324 are enriched in polar residues; that stretch reads YNNADNSQGANASS. Residue Ser501 is part of the active site. The DDHD domain maps to 519-700; sequence LEFQVDNLFF…AAFILKEILS (182 aa).

Belongs to the PA-PLA1 family.

It localises to the mitochondrion. Functionally, probable phospholipase that hydrolyzes phosphatidic acid. The chain is Probable phospholipase YOR022C, mitochondrial from Saccharomyces cerevisiae (strain ATCC 204508 / S288c) (Baker's yeast).